The sequence spans 143 residues: uncharacterized protein (143 aa).

A disordered region spans residues 35 to 59; the sequence is ITKDRGDRDDGRYGEPRIQRKPGQL. A compositionally biased stretch (basic and acidic residues) spans 36–52; that stretch reads TKDRGDRDDGRYGEPRI.

This is an uncharacterized protein from Streptomyces fradiae (Streptomyces roseoflavus).